Consider the following 179-residue polypeptide: Inosine/xanthosine triphosphatase (179 aa).

Glu-71 lines the Mg(2+) pocket. 71-72 (EA) contacts substrate.

This sequence belongs to the YjjX NTPase family. In terms of assembly, homodimer. Mg(2+) serves as cofactor. It depends on Mn(2+) as a cofactor.

The catalysed reaction is XTP + H2O = XDP + phosphate + H(+). It catalyses the reaction ITP + H2O = IDP + phosphate + H(+). In terms of biological role, phosphatase that hydrolyzes non-canonical purine nucleotides such as XTP and ITP to their respective diphosphate derivatives. Probably excludes non-canonical purines from DNA/RNA precursor pool, thus preventing their incorporation into DNA/RNA and avoiding chromosomal lesions. The sequence is that of Inosine/xanthosine triphosphatase from Shewanella sp. (strain MR-4).